A 428-amino-acid chain; its full sequence is MSAFIVLGAQWGDEGKGKMTDYLAQGADVVVRFQGGNNAGHTVEVEDKKYKLHLIPSGILYKNKVNVIGNGVVLDPKAMFEEVEYLKGMGVEVTPENLIVSDRAHLIMPYHRALDGASEKHRGKNDIGTTGKGIGPCYTDKAERSGIRVCDLLHPEVFKEKLKSNLEIKNAIITKVYGMDAFDYNEICEEYLAFGEKLKPFVKDTSVIVYNEIKNGKKVLFEGAQGNLLDIDYGTYPYVTSSNTIGGGVCPGAAIGPTMITSAVGIAKAYTTRVGKGPFPTELLDEMGDRIREAGFEYGVTTGRARRCGWLDTVILKQAARVSGLTSFAMTKIDTLAGIDKVKVCIGYDFNGKTIDYIPASLEDLALCKPIYEEFDGWDESVADARSYDELPLNAKKYLKRIEELTETKISIVSVGPERNHTIEVSDI.

Residues 12–18 and 40–42 each bind GTP; these read GDEGKGK and GHT. Catalysis depends on Asp13, which acts as the Proton acceptor. The Mg(2+) site is built by Asp13 and Gly40. IMP is bound by residues 13 to 16, 38 to 41, Thr130, Arg144, Gln225, Thr240, and Arg304; these read DEGK and NAGH. The Proton donor role is filled by His41. A substrate-binding site is contributed by 300 to 306; it reads VTTGRAR. GTP-binding positions include Arg306, 332–334, and 414–416; these read KID and SVG.

The protein belongs to the adenylosuccinate synthetase family. Homodimer. The cofactor is Mg(2+).

It is found in the cytoplasm. It carries out the reaction IMP + L-aspartate + GTP = N(6)-(1,2-dicarboxyethyl)-AMP + GDP + phosphate + 2 H(+). The protein operates within purine metabolism; AMP biosynthesis via de novo pathway; AMP from IMP: step 1/2. In terms of biological role, plays an important role in the de novo pathway of purine nucleotide biosynthesis. Catalyzes the first committed step in the biosynthesis of AMP from IMP. The protein is Adenylosuccinate synthetase of Clostridium acetobutylicum (strain ATCC 824 / DSM 792 / JCM 1419 / IAM 19013 / LMG 5710 / NBRC 13948 / NRRL B-527 / VKM B-1787 / 2291 / W).